The chain runs to 187 residues: Threonylcarbamoyl-AMP synthase (187 aa).

Residues 4-187 (QSTIAAAITC…DAMNGKVFRG (184 aa)) enclose the YrdC-like domain.

The protein belongs to the SUA5 family. TsaC subfamily.

The protein localises to the cytoplasm. It carries out the reaction L-threonine + hydrogencarbonate + ATP = L-threonylcarbamoyladenylate + diphosphate + H2O. Functionally, required for the formation of a threonylcarbamoyl group on adenosine at position 37 (t(6)A37) in tRNAs that read codons beginning with adenine. Catalyzes the conversion of L-threonine, HCO(3)(-)/CO(2) and ATP to give threonylcarbamoyl-AMP (TC-AMP) as the acyladenylate intermediate, with the release of diphosphate. This chain is Threonylcarbamoyl-AMP synthase, found in Pseudoalteromonas translucida (strain TAC 125).